The sequence spans 279 residues: Protoheme IX farnesyltransferase (279 aa).

Transmembrane regions (helical) follow at residues 1–21 (MIKP…FFLA), 29–49 (IFFL…CILN), 79–99 (ILFF…YIYI), 101–121 (FLCT…YSYL), 128–148 (FSTF…YVAV), 156–176 (CTIL…SIII), 200–220 (IIFI…LYFF), 225–245 (FFYF…SFLS), and 254–274 (IWSR…SFLM).

It belongs to the UbiA prenyltransferase family. Protoheme IX farnesyltransferase subfamily.

The protein resides in the cell membrane. It catalyses the reaction heme b + (2E,6E)-farnesyl diphosphate + H2O = Fe(II)-heme o + diphosphate. It functions in the pathway porphyrin-containing compound metabolism; heme O biosynthesis; heme O from protoheme: step 1/1. In terms of biological role, converts heme B (protoheme IX) to heme O by substitution of the vinyl group on carbon 2 of heme B porphyrin ring with a hydroxyethyl farnesyl side group. This Buchnera aphidicola subsp. Cinara cedri (strain Cc) protein is Protoheme IX farnesyltransferase.